A 625-amino-acid polypeptide reads, in one-letter code: Probable thymidylate synthase (625 aa).

The disordered stretch occupies residues 224–323; the sequence is AVKNIDGQDD…PEPPVPFTSS (100 aa). Residues 243 to 257 show a composition bias toward acidic residues; it reads EEYDDDDDDDVDDNE. 2 stretches are compositionally biased toward polar residues: residues 258 to 269 and 293 to 312; these read QSNSMIETSANA and SQAPLGSESVDTQASENVTT. DUMP-binding positions include Arg350 and 477–478; that span reads RR. Cys497 (nucleophile) is an active-site residue. Residues 524-527, Asn535, and 565-567 contribute to the dUMP site; these read RSAD and HIY. Residue Asp527 coordinates (6R)-5,10-methylene-5,6,7,8-tetrahydrofolate.

This sequence in the N-terminal section; belongs to the HFCD (homo-oligomeric flavin containing Cys decarboxylase) superfamily. In the C-terminal section; belongs to the thymidylate synthase family.

It is found in the cytoplasm. It carries out the reaction dUMP + (6R)-5,10-methylene-5,6,7,8-tetrahydrofolate = 7,8-dihydrofolate + dTMP. It functions in the pathway pyrimidine metabolism; dTTP biosynthesis. Functionally, required for both nuclear and mitochondrial DNA synthesis. The sequence is that of Probable thymidylate synthase from Schizosaccharomyces pombe (strain 972 / ATCC 24843) (Fission yeast).